Consider the following 462-residue polypeptide: Neuronal acetylcholine receptor subunit non-alpha-2 (462 aa).

The first 30 residues, 1-30 (MTLAVIGLFTLFTSIIAITPAREFVSLAER), serve as a signal peptide directing secretion. Residues 31–234 (EDALLRELFQ…ITYSFILKRL (204 aa)) are Extracellular-facing. Asparagine 53 and asparagine 168 each carry an N-linked (GlcNAc...) asparagine glycan. A disulfide bridge links cysteine 155 with cysteine 169. The next 3 helical transmembrane spans lie at 235–259 (PLFY…VFYL), 267–284 (VSLS…LLVI), and 301–322 (YLLF…VINV). Residues 323–428 (HHRSSATYHP…WKFVAQVLDR (106 aa)) are Cytoplasmic-facing. Residues 362–372 (ELEPHSPDLKP) show a composition bias toward basic and acidic residues. The interval 362–384 (ELEPHSPDLKPRNKKGPPGPEGE) is disordered. A helical membrane pass occupies residues 429–446 (IFLWTFLTVSVLGTILIF).

Belongs to the ligand-gated ion channel (TC 1.A.9) family. Acetylcholine receptor (TC 1.A.9.1) subfamily. Neuronal AChR seems to be composed of two different type of subunits: alpha and beta.

The protein localises to the postsynaptic cell membrane. It localises to the cell membrane. After binding acetylcholine, the AChR responds by an extensive change in conformation that affects all subunits and leads to opening of an ion-conducting channel across the plasma membrane. The protein is Neuronal acetylcholine receptor subunit non-alpha-2 of Carassius auratus (Goldfish).